We begin with the raw amino-acid sequence, 481 residues long: UDP-N-acetylmuramate--L-alanine ligase (481 aa).

ATP is bound at residue 135–141 (GTHGKTT).

Belongs to the MurCDEF family.

The protein resides in the cytoplasm. It catalyses the reaction UDP-N-acetyl-alpha-D-muramate + L-alanine + ATP = UDP-N-acetyl-alpha-D-muramoyl-L-alanine + ADP + phosphate + H(+). The protein operates within cell wall biogenesis; peptidoglycan biosynthesis. Its function is as follows. Cell wall formation. The sequence is that of UDP-N-acetylmuramate--L-alanine ligase from Nostoc punctiforme (strain ATCC 29133 / PCC 73102).